We begin with the raw amino-acid sequence, 317 residues long: Xylose/arabinose import permease protein XacH (317 aa).

The next 6 helical transmembrane spans lie at 40 to 60, 98 to 118, 132 to 152, 179 to 199, 241 to 261, and 290 to 310; these read GIPF…NFAI, LVLL…LAIL, VYLL…LWMF, IALG…TMVV, AAVV…ALVG, and AAIA…YLYY. The 216-residue stretch at 94–309 folds into the ABC transmembrane type-1 domain; that stretch reads AQNNLVLLVG…ALGVIGPYLY (216 aa).

It belongs to the binding-protein-dependent transport system permease family. In terms of assembly, the complex is composed of two ATP-binding proteins (XacJ and XacK), two transmembrane proteins (XacH and XacI) and a solute-binding protein (XacG).

It is found in the cell membrane. Functionally, part of the ABC transporter complex XacGHIJK involved in the uptake of xylose and arabinose. Responsible for the translocation of the substrate across the membrane. This Haloferax volcanii (strain ATCC 29605 / DSM 3757 / JCM 8879 / NBRC 14742 / NCIMB 2012 / VKM B-1768 / DS2) (Halobacterium volcanii) protein is Xylose/arabinose import permease protein XacH.